A 333-amino-acid polypeptide reads, in one-letter code: Na(+)-translocating ferredoxin:NAD(+) oxidoreductase complex subunit B (333 aa).

Positions 1–27 (MLNAILVPVGILGVFGLIFGIGLAIAA) are hydrophobic. The 4Fe-4S domain maps to 33–92 (YEDPRVPLVRAALPGANCGGCGLPGCDALAANIVGGSAAIDACPVGGASCAAAVAEIMGM). The [4Fe-4S] cluster site is built by Cys-50, Cys-53, Cys-58, Cys-75, Cys-138, Cys-142, Cys-148, Cys-152, Cys-172, Cys-175, Cys-178, Cys-182, Cys-217, Cys-220, Cys-223, Cys-227, Cys-246, Cys-249, Cys-252, Cys-256, Cys-279, Cys-282, Cys-285, Cys-289, Cys-310, Cys-313, Cys-316, and Cys-320. 4Fe-4S ferredoxin-type domains lie at 126 to 162 (REAM…IGED), 163 to 192 (GLPK…LVPE), 207 to 237 (KIAR…VENN), 239 to 266 (AKID…GDVE), 270 to 299 (STAY…GEIK), and 301 to 330 (PPYV…MRPN).

This sequence belongs to the 4Fe4S bacterial-type ferredoxin family. RnfB subfamily. The complex is composed of six subunits: RnfA, RnfB, RnfC, RnfD, RnfE and RnfG. [4Fe-4S] cluster serves as cofactor.

Its subcellular location is the cell membrane. It catalyses the reaction 2 reduced [2Fe-2S]-[ferredoxin] + Na(+)(in) + NAD(+) + H(+) = 2 oxidized [2Fe-2S]-[ferredoxin] + Na(+)(out) + NADH. Part of a membrane-bound complex that couples electron transfer with translocation of ions across the membrane. Couples electron transfer from reduced ferredoxin to NAD(+) with electrogenic movement of Na(+) out of the cell. Involved in caffeate respiration. In Acetobacterium woodii (strain ATCC 29683 / DSM 1030 / JCM 2381 / KCTC 1655 / WB1), this protein is Na(+)-translocating ferredoxin:NAD(+) oxidoreductase complex subunit B.